The chain runs to 356 residues: Nitrilase, arylacetone-specific (356 aa).

The CN hydrolase domain occupies 7 to 280 (VRAAAVQAAS…EGLIIADLNM (274 aa)). Glu-47 (proton acceptor) is an active-site residue. Residue Lys-129 is the Proton donor of the active site. The Nucleophile role is filled by Cys-163. The segment at 324–356 (QEEAPEPHVQSTAAPVAVSQTQDSDTLLVQEPS) is disordered. Over residues 332 to 356 (VQSTAAPVAVSQTQDSDTLLVQEPS) the composition is skewed to polar residues.

The protein belongs to the carbon-nitrogen hydrolase superfamily. Nitrilase family. In terms of assembly, homohexamer.

It carries out the reaction a nitrile + 2 H2O = a carboxylate + NH4(+). In terms of biological role, nitrilase that acts mostly on arylacetonitriles. The protein is Nitrilase, arylacetone-specific of Alcaligenes faecalis.